The sequence spans 527 residues: Arginine--tRNA ligase (527 aa).

Residues 111-121 (ANPTGPLHIGH) carry the 'HIGH' region motif.

The protein belongs to the class-I aminoacyl-tRNA synthetase family. Monomer.

Its subcellular location is the cytoplasm. It catalyses the reaction tRNA(Arg) + L-arginine + ATP = L-arginyl-tRNA(Arg) + AMP + diphosphate. The chain is Arginine--tRNA ligase from Campylobacter concisus (strain 13826).